A 130-amino-acid polypeptide reads, in one-letter code: Small ribosomal subunit protein uS11 (130 aa).

This sequence belongs to the universal ribosomal protein uS11 family. In terms of assembly, part of the 30S ribosomal subunit. Interacts with proteins S7 and S18. Binds to IF-3.

In terms of biological role, located on the platform of the 30S subunit, it bridges several disparate RNA helices of the 16S rRNA. Forms part of the Shine-Dalgarno cleft in the 70S ribosome. This Latilactobacillus sakei subsp. sakei (strain 23K) (Lactobacillus sakei subsp. sakei) protein is Small ribosomal subunit protein uS11.